A 489-amino-acid chain; its full sequence is MSSQEIFKKYEQKVVEYQDHIEELKSTKNDYKQLIDTLQHLPDTLQPKIMVPMGKLAFFEGNLKNTNEILILLGDNYFAKRSSKQTIDIIQRRDKDIDTSINDLREQIKGLKQRVSMTTDLSKALHEKEYDNIVEIKEEYNSDEEREKEKKRKQKPQKSTTTTTTTTTSKDKPKTEEEKKKSKEMDEEFDKMLKRLSILEEKENKMGDDYDEEEFNKKFNKKLDITGSDEEYDDDNYNNNNDDDDDNDEDDDREYYQEEGFEDEKPENSNYNKNIEEDDHDDDDDYYDEGEEIVEYYDENGNIVDINDPNVEYIQGDDDNDDNDNEEDEVDVELNESELEEIKDFHMDKKGQDLSEKEVKELTDFYHSKQKKRISYIDTPQPPTPEATTSITPKSILKTNSSGNLMSTIPKSYNENDENDIRRYIKNLDKQEKFENQKTISVPNPPKDVAFSGDIVEKETDLFPFDEIPKPTPPSNAKQSRFKSSRQNK.

4 disordered regions span residues 141–188, 200–329, 396–415, and 434–489; these read NSDE…MDEE, EEKE…EEDE, ILKT…SYNE, and FENQ…RQNK. Positions 157 to 168 are enriched in low complexity; it reads QKSTTTTTTTTT. 2 stretches are compositionally biased toward basic and acidic residues: residues 169–188 and 215–224; these read SKDK…MDEE and FNKKFNKKLD. 3 stretches are compositionally biased toward acidic residues: residues 227-265, 276-298, and 315-329; these read GSDE…EDEK, EEDD…EYYD, and QGDD…EEDE. The segment covering 396 to 413 has biased composition (polar residues); sequence ILKTNSSGNLMSTIPKSY. A compositionally biased stretch (basic residues) spans 480 to 489; sequence SRFKSSRQNK.

The protein belongs to the RNA polymerase II subunit 5-mediating protein family.

It localises to the nucleus. In Dictyostelium discoideum (Social amoeba), this protein is RNA polymerase II subunit 5-mediating protein homolog (rmp).